A 511-amino-acid chain; its full sequence is Bifunctional purine biosynthesis protein PurH (511 aa).

In terms of domain architecture, MGS-like spans 1–146 (MGRLALISVT…KNFAHLTVIS (146 aa)).

The protein belongs to the PurH family.

It carries out the reaction (6R)-10-formyltetrahydrofolate + 5-amino-1-(5-phospho-beta-D-ribosyl)imidazole-4-carboxamide = 5-formamido-1-(5-phospho-D-ribosyl)imidazole-4-carboxamide + (6S)-5,6,7,8-tetrahydrofolate. It catalyses the reaction IMP + H2O = 5-formamido-1-(5-phospho-D-ribosyl)imidazole-4-carboxamide. It functions in the pathway purine metabolism; IMP biosynthesis via de novo pathway; 5-formamido-1-(5-phospho-D-ribosyl)imidazole-4-carboxamide from 5-amino-1-(5-phospho-D-ribosyl)imidazole-4-carboxamide (10-formyl THF route): step 1/1. The protein operates within purine metabolism; IMP biosynthesis via de novo pathway; IMP from 5-formamido-1-(5-phospho-D-ribosyl)imidazole-4-carboxamide: step 1/1. This chain is Bifunctional purine biosynthesis protein PurH, found in Microcystis aeruginosa (strain NIES-843 / IAM M-2473).